Here is a 246-residue protein sequence, read N- to C-terminus: Probable transcriptional regulatory protein ORF2U (246 aa).

It belongs to the TACO1 family.

The protein localises to the cytoplasm. In Hathewaya histolytica (Clostridium histolyticum), this protein is Probable transcriptional regulatory protein ORF2U.